The following is a 349-amino-acid chain: Protein arginine N-methyltransferase 6 (349 aa).

The SAM-dependent MTase PRMT-type domain occupies 17–324; that stretch reads DYMYFDSYSD…EENSRHICIR (308 aa). S-adenosyl-L-methionine is bound by residues histidine 30, arginine 39, glycine 63, glutamate 85, and glutamate 114. Active-site residues include glutamate 128 and glutamate 137.

The protein belongs to the class I-like SAM-binding methyltransferase superfamily. Protein arginine N-methyltransferase family. PRMT6 subfamily.

The protein localises to the nucleus. The enzyme catalyses L-arginyl-[protein] + 2 S-adenosyl-L-methionine = N(omega),N(omega)-dimethyl-L-arginyl-[protein] + 2 S-adenosyl-L-homocysteine + 2 H(+). Its function is as follows. Arginine methyltransferase that can catalyze the formation of both omega-N monomethylarginine (MMA) and asymmetrical dimethylarginine (aDMA), with a strong preference for the formation of aDMA. Preferentially methylates arginyl residues present in a glycine and arginine-rich domain and displays preference for monomethylated substrates. Specifically mediates the asymmetric dimethylation of histone H3 'Arg-2' to form H3R2me2a. H3R2me2a represents a specific tag for epigenetic transcriptional repression and is mutually exclusive with methylation on histone H3 'Lys-4' (H3K4me2 and H3K4me3). Acts as a transcriptional repressor of various genes such as HOXA2, THBS1 and TP53. Repression of TP53 blocks cellular senescence. Also methylates histone H2A and H4 'Arg-3' (H2AR3me and H4R3me, respectively). Acts as a regulator of DNA base excision during DNA repair by mediating the methylation of DNA polymerase beta (POLB), leading to the stimulation of its polymerase activity by enhancing DNA binding and processivity. Methylates HMGA1. Regulates alternative splicing events. Acts as a transcriptional coactivator of a number of steroid hormone receptors including ESR1, ESR2, PGR and NR3C1. The protein is Protein arginine N-methyltransferase 6 (prmt6) of Danio rerio (Zebrafish).